Reading from the N-terminus, the 301-residue chain is NDP-polyphosphate phosphotransferase 3 (301 aa).

Positions 1 to 12 are enriched in basic and acidic residues; that stretch reads MNRNGSTKDPRR. A disordered region spans residues 1 to 21; it reads MNRNGSTKDPRRMTGAATGEI.

The protein belongs to the polyphosphate kinase 2 (PPK2) family. Class I subfamily. Mg(2+) serves as cofactor.

It catalyses the reaction [phosphate](n) + ATP = [phosphate](n+1) + ADP. It carries out the reaction [phosphate](n) + CTP = [phosphate](n+1) + CDP. The catalysed reaction is [phosphate](n) + GTP = [phosphate](n+1) + GDP. The enzyme catalyses [phosphate](n) + UTP = [phosphate](n+1) + UDP. Its function is as follows. Uses inorganic polyphosphate (polyP) as a donor to convert NDP to NTP. PolyP hydrolysis is slightly faster with UDP, but it can also use ADP, GDP and CDP. The sequence is that of NDP-polyphosphate phosphotransferase 3 from Ruegeria pomeroyi (strain ATCC 700808 / DSM 15171 / DSS-3) (Silicibacter pomeroyi).